The following is a 365-amino-acid chain: Peptide chain release factor 2 (365 aa).

N5-methylglutamine is present on Gln251.

This sequence belongs to the prokaryotic/mitochondrial release factor family. In terms of processing, methylated by PrmC. Methylation increases the termination efficiency of RF2.

It is found in the cytoplasm. Its function is as follows. Peptide chain release factor 2 directs the termination of translation in response to the peptide chain termination codons UGA and UAA. This Aliarcobacter butzleri (strain RM4018) (Arcobacter butzleri) protein is Peptide chain release factor 2.